Here is a 458-residue protein sequence, read N- to C-terminus: tRNA modification GTPase MnmE (458 aa).

The (6S)-5-formyl-5,6,7,8-tetrahydrofolate site is built by Arg22, Glu84, and Arg123. The TrmE-type G domain occupies 220-379; the sequence is GIATAIIGRP…LEKAIADLFF (160 aa). Position 230 (Asn230) interacts with K(+). GTP contacts are provided by residues 230–235, 249–255, and 274–277; these read NVGKSS, TDIAGTT, and DTAG. Residue Ser234 coordinates Mg(2+). The K(+) site is built by Thr249, Ile251, and Thr254. Position 255 (Thr255) interacts with Mg(2+). Lys458 provides a ligand contact to (6S)-5-formyl-5,6,7,8-tetrahydrofolate.

Belongs to the TRAFAC class TrmE-Era-EngA-EngB-Septin-like GTPase superfamily. TrmE GTPase family. In terms of assembly, homodimer. Heterotetramer of two MnmE and two MnmG subunits. K(+) serves as cofactor.

The protein resides in the cytoplasm. Exhibits a very high intrinsic GTPase hydrolysis rate. Involved in the addition of a carboxymethylaminomethyl (cmnm) group at the wobble position (U34) of certain tRNAs, forming tRNA-cmnm(5)s(2)U34. The chain is tRNA modification GTPase MnmE from Bacillus cereus (strain ZK / E33L).